Consider the following 887-residue polypeptide: Ubiquitin carboxyl-terminal hydrolase 4 (887 aa).

Residues 202–328 (KEDSLLLIDV…WIKNGGEIDK (127 aa)) enclose the Rhodanese domain. 2 disordered regions span residues 358–465 (AFPD…PKPP) and 484–505 (QKQNRSRSLEPQLPPIPSTLIR). The span at 387–402 (TPPNGSSTLGRINSPV) shows a compositional bias: polar residues. Residues 525 to 885 (VGLENMGNSC…SAYVLFYHRI (361 aa)) form the USP domain. C534 acts as the Nucleophile in catalysis. The active-site Proton acceptor is H842.

The protein belongs to the peptidase C19 family.

The protein resides in the cytoplasm. It is found in the late endosome membrane. The enzyme catalyses Thiol-dependent hydrolysis of ester, thioester, amide, peptide and isopeptide bonds formed by the C-terminal Gly of ubiquitin (a 76-residue protein attached to proteins as an intracellular targeting signal).. RFU1 is an inhibitor of deubiquitination activity. In terms of biological role, ubiquitin thioesterase that acts at the late endosome/prevacuolar compartment to recover ubiquitin from ubiquitinated membrane proteins en route to the vacuole. Also removes ubiquitin from soluble proteins targeted to proteasomes. Is essential to maintain a normal level of free ubiquitin. Required for promoting coordination of DNA replication and avoids DNA overreplication. This is Ubiquitin carboxyl-terminal hydrolase 4 (DOA4) from Candida glabrata (strain ATCC 2001 / BCRC 20586 / JCM 3761 / NBRC 0622 / NRRL Y-65 / CBS 138) (Yeast).